An 87-amino-acid polypeptide reads, in one-letter code: Cytochrome c6 (87 aa).

4 residues coordinate heme c: Cys10, Cys13, His14, and Met56.

This sequence belongs to the cytochrome c family. PetJ subfamily. As to quaternary structure, monomer. Binds 1 heme c group covalently per subunit.

The protein localises to the plastid. It is found in the chloroplast thylakoid lumen. In terms of biological role, functions as an electron carrier between membrane-bound cytochrome b6-f and photosystem I in oxygenic photosynthesis. The protein is Cytochrome c6 (petJ) of Euglena gracilis.